The chain runs to 204 residues: Venom allergen 5 (204 aa).

Intrachain disulfides connect Cys-4–Cys-17, Cys-8–Cys-101, Cys-26–Cys-94, and Cys-170–Cys-187. An SCP domain is found at 45–189 (LKEHNDFRQK…WHKHYLVCNY (145 aa)).

It belongs to the CRISP family. Venom allergen 5-like subfamily. Expressed by the venom gland.

The protein resides in the secreted. This is Venom allergen 5 from Vespula pensylvanica (Western yellow jacket).